The chain runs to 518 residues: Subtilisin-like protease 1 (518 aa).

An N-terminal signal peptide occupies residues Met-1 to Ala-19. A propeptide spanning residues Ala-20 to His-116 is cleaved from the precursor. The Inhibitor I9 domain occupies Ser-34–Val-115. Positions Ser-126–Lys-400 constitute a Peptidase S8 domain. Residues Asp-158 and His-190 each act as charge relay system in the active site. The segment at Gly-175–Met-198 is disordered. N-linked (GlcNAc...) asparagine glycans are attached at residues Asn-233 and Asn-251. Positions Asn-282–Ser-294 are enriched in polar residues. The interval Asn-282–Ser-312 is disordered. Ser-345 acts as the Charge relay system in catalysis. Residues Thr-378–Ile-394 are compositionally biased toward polar residues. The tract at residues Thr-378–Phe-496 is disordered. Composition is skewed to pro residues over residues Asn-405–Pro-470 and Ala-478–Pro-487.

The protein belongs to the peptidase S8 family.

Its subcellular location is the secreted. In terms of biological role, secreted subtilisin-like serine protease with keratinolytic activity that contributes to pathogenicity. The protein is Subtilisin-like protease 1 (SUB1) of Trichophyton verrucosum (strain HKI 0517).